Consider the following 107-residue polypeptide: Anti-adapter protein IraM (107 aa).

It belongs to the IraM/RssC family.

Its subcellular location is the cytoplasm. Inhibits RpoS proteolysis by regulating RssB activity, thereby increasing the stability of the sigma stress factor RpoS during magnesium starvation. In Escherichia coli O17:K52:H18 (strain UMN026 / ExPEC), this protein is Anti-adapter protein IraM.